The primary structure comprises 100 residues: Urease subunit gamma (100 aa).

Belongs to the urease gamma subunit family. As to quaternary structure, heterotrimer of UreA (gamma), UreB (beta) and UreC (alpha) subunits. Three heterotrimers associate to form the active enzyme.

Its subcellular location is the cytoplasm. It carries out the reaction urea + 2 H2O + H(+) = hydrogencarbonate + 2 NH4(+). Its pathway is nitrogen metabolism; urea degradation; CO(2) and NH(3) from urea (urease route): step 1/1. In Bordetella pertussis (strain Tohama I / ATCC BAA-589 / NCTC 13251), this protein is Urease subunit gamma.